The primary structure comprises 125 residues: MKRLLSWLTGLVVMAGLLFSLATPSGVQAADIRNVADDKIAERGDKVDLNNSSVRRFQQFPGMYPTLAGKIVLGGPYESVDDVLALDLTDRQKELFEKYRDNFTVTAPSIALNEGFDRINDGQYR.

Residues 1–29 (MKRLLSWLTGLVVMAGLLFSLATPSGVQA) form the signal peptide.

It belongs to the PsbU family. As to quaternary structure, PSII is composed of 1 copy each of membrane proteins PsbA, PsbB, PsbC, PsbD, PsbE, PsbF, PsbH, PsbI, PsbJ, PsbK, PsbL, PsbM, PsbT, PsbX, PsbY, PsbZ, Psb30/Ycf12, peripheral proteins PsbO, CyanoQ (PsbQ), PsbU, PsbV and a large number of cofactors. It forms dimeric complexes.

It is found in the cellular thylakoid membrane. In terms of biological role, one of the extrinsic, lumenal subunits of photosystem II (PSII). PSII is a light-driven water plastoquinone oxidoreductase, using light energy to abstract electrons from H(2)O, generating a proton gradient subsequently used for ATP formation. The extrinsic proteins stabilize the structure of photosystem II oxygen-evolving complex (OEC), the ion environment of oxygen evolution and protect the OEC against heat-induced inactivation. The chain is Photosystem II extrinsic protein U from Synechococcus sp. (strain WH7803).